The chain runs to 102 residues: Small ribosomal subunit protein eS24 (102 aa).

Belongs to the eukaryotic ribosomal protein eS24 family.

This is Small ribosomal subunit protein eS24 from Methanococcus maripaludis (strain DSM 14266 / JCM 13030 / NBRC 101832 / S2 / LL).